The chain runs to 820 residues: TORTIFOLIA1-like protein 2 (820 aa).

HEAT repeat units follow at residues 61–98 (DKVS…FHEG), 102–139 (PYLG…KMSC), 146–183 (GVFV…SSPE), 187–224 (AIIQ…AGGA), and 228–265 (SVLS…TGEK). The segment covering 304-321 (PGSDSPEPSETESSVKES) has biased composition (low complexity). Disordered regions lie at residues 304-325 (PGSD…YNGA), 357-377 (PVSA…SNQD), and 584-644 (GSTI…GKTG). Residues 367 to 377 (YNDDPRKSNQD) are compositionally biased toward basic and acidic residues. The segment covering 584–613 (GSTISPRLSSCTSRTSTDIRNRQSTLSTSK) has biased composition (polar residues).

The protein is TORTIFOLIA1-like protein 2 of Arabidopsis thaliana (Mouse-ear cress).